Consider the following 132-residue polypeptide: Small ribosomal subunit protein eS24 (132 aa).

The disordered stretch occupies residues 91–132 (LATHGLYEKKKTSRKQRTERQNRMKKVRSIKKASVGAAGKKN). A compositionally biased stretch (basic and acidic residues) spans 96–112 (LYEKKKTSRKQRTERQN).

This sequence belongs to the eukaryotic ribosomal protein eS24 family. Component of the small ribosomal subunit.

The protein localises to the cytoplasm. Component of the small ribosomal subunit. The ribosome is a large ribonucleoprotein complex responsible for the synthesis of proteins in the cell. Required for processing of pre-rRNA and maturation of 40S ribosomal subunits. This Oryzias latipes (Japanese rice fish) protein is Small ribosomal subunit protein eS24 (rps24).